Consider the following 377-residue polypeptide: Flagellin D (377 aa).

Coiled-coil stretches lie at residues 103–129 (SNSK…IAET) and 310–339 (AFQN…IKDT).

This sequence belongs to the bacterial flagellin family. Heteromer of multiple flagellin subunits including FlaA, FlaB, FlaC, FlaD and FlaE.

The protein resides in the secreted. Its subcellular location is the bacterial flagellum. In terms of biological role, flagellin is the subunit protein which polymerizes to form the filaments of bacterial flagella. FlaD is not essential for flagellar synthesis and motility. In Vibrio cholerae serotype O1 (strain ATCC 39315 / El Tor Inaba N16961), this protein is Flagellin D (flaD).